A 462-amino-acid polypeptide reads, in one-letter code: Cell wall mannoprotein 1 (462 aa).

The signal sequence occupies residues 1–18 (MKFLSSLVVLGLSAQALA). A hexadecanoate-binding site is contributed by serine 313. The segment at 346 to 429 (FAGTGPAPTT…SVPAAPTGGN (84 aa)) is disordered. Residues 347 to 366 (AGTGPAPTTSSTPEASTAPA) show a composition bias toward low complexity. Over residues 399-420 (VWPTSTTASPDVQPTITSSGTS) the composition is skewed to polar residues.

It belongs to the cell wall mannoprotein 1 family. Monomer. Post-translationally, mannoprotein, glycosylated.

It is found in the secreted. The protein localises to the cell wall. Constitutive protein of the cell wall. Binds fatty acids and may thus serve as a fatty acid transporter between P.marneffei and host cells during infection. Abundant antigen target of host humoral immune response. This Talaromyces marneffei (Penicillium marneffei) protein is Cell wall mannoprotein 1.